The sequence spans 262 residues: uncharacterized protein (262 aa).

Residues histidine 7, histidine 9, glutamate 96, histidine 132, histidine 156, and aspartate 211 each contribute to the a divalent metal cation site.

The protein belongs to the metallo-dependent hydrolases superfamily. TatD-type hydrolase family. It depends on a divalent metal cation as a cofactor.

This is an uncharacterized protein from Mycoplasma genitalium (strain ATCC 33530 / DSM 19775 / NCTC 10195 / G37) (Mycoplasmoides genitalium).